A 492-amino-acid chain; its full sequence is Steroid 21-hydroxylase (492 aa).

Arg92 and Lys121 together coordinate heme b. 17alpha-hydroxyprogesterone is bound at residue Arg232. Arg232 provides a ligand contact to progesterone. His364, Arg425, and Cys427 together coordinate heme b.

It belongs to the cytochrome P450 family. Heme b is required as a cofactor.

It is found in the endoplasmic reticulum membrane. Its subcellular location is the microsome membrane. The catalysed reaction is progesterone + reduced [NADPH--hemoprotein reductase] + O2 = 21-hydroxyprogesterone + oxidized [NADPH--hemoprotein reductase] + H2O + H(+). It catalyses the reaction 17alpha-hydroxyprogesterone + reduced [NADPH--hemoprotein reductase] + O2 = 11-deoxycortisol + oxidized [NADPH--hemoprotein reductase] + H2O + H(+). A cytochrome P450 monooxygenase that plays a major role in adrenal steroidogenesis. Catalyzes the hydroxylation at C-21 of progesterone and 17alpha-hydroxyprogesterone to respectively form 11-deoxycorticosterone and 11-deoxycortisol, intermediate metabolites in the biosynthetic pathway of mineralocorticoids and glucocorticoids. Mechanistically, uses molecular oxygen inserting one oxygen atom into a substrate, and reducing the second into a water molecule, with two electrons provided by NADPH via cytochrome P450 reductase (CPR; NADPH-ferrihemoprotein reductase). The sequence is that of Steroid 21-hydroxylase (CYP21) from Sus scrofa (Pig).